The primary structure comprises 205 residues: Thymidylate kinase (205 aa).

10–17 (GLEGAGKS) contributes to the ATP binding site.

This sequence belongs to the thymidylate kinase family.

The enzyme catalyses dTMP + ATP = dTDP + ADP. Its function is as follows. Phosphorylation of dTMP to form dTDP in both de novo and salvage pathways of dTTP synthesis. The polypeptide is Thymidylate kinase (Idiomarina loihiensis (strain ATCC BAA-735 / DSM 15497 / L2-TR)).